A 180-amino-acid polypeptide reads, in one-letter code: Colicin-E5 (180 aa).

Disordered stretches follow at residues 24–143 (AQTD…GSPG) and 155–180 (VTQISDKTDPGWVDDSRIQWGNKNDQ). Over residues 54 to 76 (ESRKKKEDNKRDAEGKLNDELAK) the composition is skewed to basic and acidic residues. The segment at 74 to 180 (LAKNKGKIPG…RIQWGNKNDQ (107 aa)) is nuclease. The span at 106 to 116 (NTVSNGATGTS) shows a compositional bias: polar residues. A compositionally biased stretch (basic and acidic residues) spans 160 to 171 (DKTDPGWVDDSR).

Belongs to the colicin/pyosin nuclease family.

In terms of biological role, colicins are polypeptide toxins produced by and active against E.coli and closely related bacteria. This colicin is an endonuclease. This is Colicin-E5 (col) from Escherichia coli.